Here is a 629-residue protein sequence, read N- to C-terminus: Methionine--tRNA ligase (629 aa).

A 'HIGH' region motif is present at residues 10–20 (YYVNSEPHIGS). 4 residues coordinate Zn(2+): cysteine 125, cysteine 128, cysteine 146, and cysteine 149. Residues 297 to 301 (KISKS) carry the 'KMSKS' region motif. Position 300 (lysine 300) interacts with ATP. The tRNA-binding domain occupies 529-629 (DFSKVDLRIA…GEITPGAKVS (101 aa)).

Belongs to the class-I aminoacyl-tRNA synthetase family. MetG type 2A subfamily. In terms of assembly, homodimer. Requires Zn(2+) as cofactor.

It localises to the cytoplasm. It carries out the reaction tRNA(Met) + L-methionine + ATP = L-methionyl-tRNA(Met) + AMP + diphosphate. Its function is as follows. Is required not only for elongation of protein synthesis but also for the initiation of all mRNA translation through initiator tRNA(fMet) aminoacylation. The protein is Methionine--tRNA ligase (metG) of Thermotoga maritima (strain ATCC 43589 / DSM 3109 / JCM 10099 / NBRC 100826 / MSB8).